Here is a 501-residue protein sequence, read N- to C-terminus: NAD(P)H-quinone oxidoreductase subunit 2, chloroplastic (501 aa).

The next 14 membrane-spanning stretches (helical) occupy residues 15–35, 42–62, 82–102, 107–127, 132–152, 167–187, 210–230, 244–264, 278–298, 307–327, 334–354, 378–398, 410–430, and 466–486; these read ILPE…DLIL, VFFF…IFQL, IFRI…IDFI, LAIT…MFLC, LITI…LSGY, LLIG…LYGL, FGSL…LSLV, PTPV…ALLV, WHSL…LVAI, LAYS…TGNF, IVYL…IILF, FSLA…GFFG, GLYF…YYYL, and VSII…NPII.

The protein belongs to the complex I subunit 2 family. In terms of assembly, NDH is composed of at least 16 different subunits, 5 of which are encoded in the nucleus.

Its subcellular location is the plastid. The protein resides in the chloroplast thylakoid membrane. It carries out the reaction a plastoquinone + NADH + (n+1) H(+)(in) = a plastoquinol + NAD(+) + n H(+)(out). The catalysed reaction is a plastoquinone + NADPH + (n+1) H(+)(in) = a plastoquinol + NADP(+) + n H(+)(out). Its function is as follows. NDH shuttles electrons from NAD(P)H:plastoquinone, via FMN and iron-sulfur (Fe-S) centers, to quinones in the photosynthetic chain and possibly in a chloroplast respiratory chain. The immediate electron acceptor for the enzyme in this species is believed to be plastoquinone. Couples the redox reaction to proton translocation, and thus conserves the redox energy in a proton gradient. This Physcomitrium patens (Spreading-leaved earth moss) protein is NAD(P)H-quinone oxidoreductase subunit 2, chloroplastic.